A 90-amino-acid polypeptide reads, in one-letter code: Small ribosomal subunit protein uS15 (90 aa).

Belongs to the universal ribosomal protein uS15 family. As to quaternary structure, part of the 30S ribosomal subunit. Forms a bridge to the 50S subunit in the 70S ribosome, contacting the 23S rRNA.

In terms of biological role, one of the primary rRNA binding proteins, it binds directly to 16S rRNA where it helps nucleate assembly of the platform of the 30S subunit by binding and bridging several RNA helices of the 16S rRNA. Forms an intersubunit bridge (bridge B4) with the 23S rRNA of the 50S subunit in the ribosome. The polypeptide is Small ribosomal subunit protein uS15 (Helicobacter hepaticus (strain ATCC 51449 / 3B1)).